The following is a 649-amino-acid chain: Replication factor C small subunit (649 aa).

55–385 is an ATP binding site; the sequence is GPAGVGKCVT…GCIPTVMHNT (331 aa).

This sequence belongs to the activator 1 small subunits family. RfcS subfamily. In terms of assembly, heteromultimer composed of small subunits (RfcS) and large subunits (RfcL). In terms of processing, this protein undergoes a protein self splicing that involves a post-translational excision of the intervening region (intein) followed by peptide ligation.

Its function is as follows. Part of the RFC clamp loader complex which loads the PCNA sliding clamp onto DNA. In Haloquadratum walsbyi (strain DSM 16790 / HBSQ001), this protein is Replication factor C small subunit (rfcS).